The following is a 225-amino-acid chain: Membrane protein LapB (225 aa).

It to H.influenzae HI_1119.

The protein localises to the cell membrane. In Mannheimia haemolytica (Pasteurella haemolytica), this protein is Membrane protein LapB (lapB).